A 188-amino-acid polypeptide reads, in one-letter code: Ion-translocating oxidoreductase complex subunit B (188 aa).

The tract at residues 1–23 (MIEAAVSMSALGLGLGLLLGVAA) is hydrophobic. Residues 29–88 (ESPPIVDAIEGILPGTNCGACGYPGCRGLAEAMSEGAAPVTACAPGGRDVALALAAIVET) enclose the 4Fe-4S domain. Residues Cys46, Cys49, Cys54, Cys71, Cys113, Cys116, Cys119, Cys123, Cys143, Cys146, Cys149, and Cys153 each contribute to the [4Fe-4S] cluster site. 4Fe-4S ferredoxin-type domains are found at residues 104–133 (TVAFIFEDHCTGCMRCFKRCPTDAIIGANR) and 134–163 (QIHTVVTDACIGCNACIEACPTEAIVARVK).

This sequence belongs to the 4Fe4S bacterial-type ferredoxin family. RnfB subfamily. As to quaternary structure, the complex is composed of six subunits: RnfA, RnfB, RnfC, RnfD, RnfE and RnfG. The cofactor is [4Fe-4S] cluster.

Its subcellular location is the cellular chromatophore membrane. In terms of biological role, part of a membrane-bound complex that couples electron transfer with translocation of ions across the membrane. The sequence is that of Ion-translocating oxidoreductase complex subunit B from Cereibacter sphaeroides (strain ATCC 17023 / DSM 158 / JCM 6121 / CCUG 31486 / LMG 2827 / NBRC 12203 / NCIMB 8253 / ATH 2.4.1.) (Rhodobacter sphaeroides).